The following is a 560-amino-acid chain: MKVWMAILISILCWQSSVWAVCPAWSPARAQEEISRLQQQIKQWDDDYWKEGKSEVEDGVYDQLSARLTQWQRCFGSEPRDVMMPPLNGAVMHPVAHTGVRKMVDKNALSLWMRERSDLWVQPKVDGVAVTLVYRDGKLNKAISRGNGLKGEDWTQKVSLISAVPQTVSGPLANSTLQGEIFLQREGHIQQQMGGINARAKVAGLMMRQDDSDTLNSLGVFVWAWPDGPQLMSDRLKELATAGFTLTQTYTRAVKNADEVARVRNEWWKAELPFVTDGVVVRAAKEPESRHWLPGQAEWLVAWKYQPVAQVAEVKAIQFAVGKSGKISVVASLAPVMLDDKKVQRVNIGSVRRWQEWDIAPGDQILVSLAGQGIPRIDDVVWRGAERTKPTPPENRFNSLTCYFASDVCQEQFISRLVWLGAKQVLGLDGIGEAGWRALHQTHRFEHIFSWLLLTPEQLQNTPGIAKSKSAQLWHQFNLARKQPFTRWVMAMGIPLTRAALNASDERSWSQLLFSTEQFWQQLPGTGSGRARQVIEWKENAQIKKLGSWLAAQQITGFEP.

Residue Lys-124 is the N6-AMP-lysine intermediate of the active site.

Belongs to the NAD-dependent DNA ligase family. LigB subfamily.

It carries out the reaction NAD(+) + (deoxyribonucleotide)n-3'-hydroxyl + 5'-phospho-(deoxyribonucleotide)m = (deoxyribonucleotide)n+m + AMP + beta-nicotinamide D-nucleotide.. In terms of biological role, catalyzes the formation of phosphodiester linkages between 5'-phosphoryl and 3'-hydroxyl groups in double-stranded DNA using NAD as a coenzyme and as the energy source for the reaction. The sequence is that of DNA ligase B from Escherichia coli (strain ATCC 8739 / DSM 1576 / NBRC 3972 / NCIMB 8545 / WDCM 00012 / Crooks).